The sequence spans 23 residues: Nephrotoxin PsTX-115 (23 aa).

It is found in the secreted. Its subcellular location is the nematocyst. Functionally, nephrotoxin. When injected intravenously in rats, causes severe destructive glomerular changes. At 24 hours post-injection partial disruption of the glomerular basement membrane, massive thrombus formation in glomerular capillaries, severe mesangiolysis and infiltrating cells were observed in the majority of glomeruli. This Phyllodiscus semoni (Night anemone) protein is Nephrotoxin PsTX-115.